We begin with the raw amino-acid sequence, 599 residues long: Beta-(1--&gt;2)glucan export ATP-binding/permease protein NdvA (599 aa).

Residues 21 to 301 (TITMCVASVL…ISAFINQTVT (281 aa)) enclose the ABC transmembrane type-1 domain. 5 helical membrane-spanning segments follow: residues 22–42 (ITMC…PVLF), 55–75 (IFSP…AAVF), 156–176 (MRMS…GQLV), 248–268 (MAST…VTKG), and 276–296 (IAFI…SAFI). One can recognise an ABC transporter domain in the interval 335 to 569 (IVFDNVTYEF…GGRFSDLLRA (235 aa)). 368 to 375 (GPTGAGKT) serves as a coordination point for ATP.

It belongs to the ABC transporter superfamily. Beta-(1--&gt;2)glucan exporter (TC 3.A.1.108.1) family. In terms of assembly, homodimer.

The protein resides in the cell inner membrane. It carries out the reaction [(1-&gt;2)-beta-D-glucosyl](n)(in) + ATP + H2O = [(1-&gt;2)-beta-D-glucosyl](n)(out) + ADP + phosphate + H(+). Involved in beta-(1--&gt;2)glucan export. Its export to the periplasmic space is required to exert its action as a virulence factor. Transmembrane domains (TMD) form a pore in the inner membrane and the ATP-binding domain (NBD) is responsible for energy generation. This Brucella abortus (strain 2308) protein is Beta-(1--&gt;2)glucan export ATP-binding/permease protein NdvA.